The sequence spans 446 residues: Ribosomal protein uS12 methylthiotransferase RimO (446 aa).

The MTTase N-terminal domain occupies 10 to 122 (KTLHMVSLGC…IDELVNEKRS (113 aa)). Residues Cys19, Cys53, Cys85, Cys154, Cys158, and Cys161 each contribute to the [4Fe-4S] cluster site. A Radical SAM core domain is found at 140-369 (TGSSYHAYVK…GEIISQTTQE (230 aa)). One can recognise a TRAM domain in the interval 372 to 446 (ESEVGKTFEV…GDKLLATVIK (75 aa)).

This sequence belongs to the methylthiotransferase family. RimO subfamily. It depends on [4Fe-4S] cluster as a cofactor.

It is found in the cytoplasm. The enzyme catalyses L-aspartate(89)-[ribosomal protein uS12]-hydrogen + (sulfur carrier)-SH + AH2 + 2 S-adenosyl-L-methionine = 3-methylsulfanyl-L-aspartate(89)-[ribosomal protein uS12]-hydrogen + (sulfur carrier)-H + 5'-deoxyadenosine + L-methionine + A + S-adenosyl-L-homocysteine + 2 H(+). In terms of biological role, catalyzes the methylthiolation of an aspartic acid residue of ribosomal protein uS12. The polypeptide is Ribosomal protein uS12 methylthiotransferase RimO (Aliarcobacter butzleri (strain RM4018) (Arcobacter butzleri)).